The primary structure comprises 369 residues: Putative 2-aminoethylphosphonate import ATP-binding protein PhnT (369 aa).

The ABC transporter domain maps to 19 to 250 (IVLDSLRVAY…PPNRFAAEFL (232 aa)). Residue 51–58 (GPSGSGKT) coordinates ATP.

The protein belongs to the ABC transporter superfamily. 2-aminoethylphosphonate importer (TC 3.A.1.11.5) family.

Its subcellular location is the cell inner membrane. Probably part of the PhnSTUV complex (TC 3.A.1.11.5) involved in 2-aminoethylphosphonate import. Probably responsible for energy coupling to the transport system. This chain is Putative 2-aminoethylphosphonate import ATP-binding protein PhnT (phnT), found in Salmonella typhimurium (strain LT2 / SGSC1412 / ATCC 700720).